Here is a 605-residue protein sequence, read N- to C-terminus: Ubiquitin carboxyl-terminal hydrolase 2 (605 aa).

The interval 1–200 is necessary for interaction with MDM4; that stretch reads MSQLSSTLKR…CPEYLVDYLE (200 aa). Disordered stretches follow at residues 71 to 107 and 237 to 264; these read LLDY…GSGL and WETG…KSAQ. Residues 90-100 are compositionally biased toward basic and acidic residues; it reads KRAESQTRGTE. Residues 245–255 show a composition bias toward low complexity; it reads PGPSRSSSPGR. One can recognise a USP domain in the interval 267-599; it reads AGLRNLGNTC…DAYLLFYELA (333 aa). Residue cysteine 276 is the Nucleophile of the active site. The necessary for interaction with MDM4 stretch occupies residues 403 to 503; it reads YLEREDSRIG…FPKILVLHLK (101 aa). Zn(2+)-binding residues include cysteine 425, cysteine 428, cysteine 476, and cysteine 479. Histidine 557 acts as the Proton acceptor in catalysis.

Belongs to the peptidase C19 family. USP2 subfamily. In terms of assembly, homooligomer. Found in trimeric complex with MDM2 and MDM4 and USP2. Interacts with CCND1; the interaction is direct and promotes its stabilization by antagonizing ubiquitin-dependent degradation. Interacts (via N-terminus and C-terminus) with MDM2. Interacts with MDM4. Interacts with PER1. Interacts with KCNQ1; counteracts the NEDD4L-specific down-regulation of I(Ks) and restore plasma membrane localization of KCNQ1. Isoform 4: Interacts with NHERF4 and CLTC. In terms of tissue distribution, expressed in mesangial cells of the kidney and in different types of glomerulonephritides (at protein level).

Its subcellular location is the cytoplasm. It localises to the perinuclear region. The protein localises to the nucleus. It is found in the membrane. It catalyses the reaction Thiol-dependent hydrolysis of ester, thioester, amide, peptide and isopeptide bonds formed by the C-terminal Gly of ubiquitin (a 76-residue protein attached to proteins as an intracellular targeting signal).. With respect to regulation, cleavage is inhibited by ubiquitin in a dosage-dependent manner. Cleavage is blocked by ubiquitin aldehyde. Hydrolase that deubiquitinates polyubiquitinated target proteins such as MDM2, MDM4 and CCND1. Isoform 1 and isoform 4 possess both ubiquitin-specific peptidase and isopeptidase activities. Deubiquitinates MDM2 without reversing MDM2-mediated p53/TP53 ubiquitination and thus indirectly promotes p53/TP53 degradation and limits p53 activity. Has no deubiquitinase activity against p53/TP53. Prevents MDM2-mediated degradation of MDM4. Plays a role in the G1/S cell-cycle progression in normal and cancer cells. Regulates the circadian clock by modulating its intrinsic circadian rhythm and its capacity to respond to external cues. Associates with clock proteins and deubiquitinates core clock component PER1 but does not affect its overall stability. Regulates the nucleocytoplasmic shuttling and nuclear retention of PER1 and its repressive role on the clock transcription factors CLOCK and BMAL1. Plays a role in the regulation of myogenic differentiation of embryonic muscle cells. Functionally, circadian clock output effector that regulates Ca(2+) absorption in the small intestine. Probably functions by regulating protein levels of the membrane scaffold protein NHERF4 in a rhythmic manner, and is therefore likely to control Ca(2+) membrane permeability mediated by the Ca(2+) channel TRPV6 in the intestine. This chain is Ubiquitin carboxyl-terminal hydrolase 2 (USP2), found in Homo sapiens (Human).